Here is a 327-residue protein sequence, read N- to C-terminus: Probable cell division protein WhiA (327 aa).

The H-T-H motif DNA-binding region spans 275–308; it reads SLEELGRLADPPMTKDAVAGRIRRLLSMADRKAK.

This sequence belongs to the WhiA family.

In terms of biological role, involved in cell division and chromosome segregation. The sequence is that of Probable cell division protein WhiA from Mycobacterium marinum (strain ATCC BAA-535 / M).